The following is a 312-amino-acid chain: MSRPRIVFMGTPEFAVSSLAACFELGDVVAVVTQPDKPKGRGNTVTAPPVKELALSRGVPVLQPTKLRTPPFAEELRQYAPDVCVVTAYGRILPKDLLELPTHGCVNVHGSLLPRFRGAAPIQWAIAHGDTETGVSLMVMDEGLDTGPVLAMKRMAIAPDETSASLYPKLAALGGEVLREFLPAYLSGELKPVPQPSEGMVLAPIIEKDQGRLDFTKPAVELERRLRAFTPWPGAFTTLGGKLLKVHRAQARGGSGAPGTVLASGPDGIEVACGEGSLVLLDLQPEGKRVMRAADFLQGHKLAPGSQPFVAG.

111–114 (SLLP) contacts (6S)-5,6,7,8-tetrahydrofolate.

The protein belongs to the Fmt family.

It carries out the reaction L-methionyl-tRNA(fMet) + (6R)-10-formyltetrahydrofolate = N-formyl-L-methionyl-tRNA(fMet) + (6S)-5,6,7,8-tetrahydrofolate + H(+). Functionally, attaches a formyl group to the free amino group of methionyl-tRNA(fMet). The formyl group appears to play a dual role in the initiator identity of N-formylmethionyl-tRNA by promoting its recognition by IF2 and preventing the misappropriation of this tRNA by the elongation apparatus. The protein is Methionyl-tRNA formyltransferase of Myxococcus xanthus (strain DK1622).